A 121-amino-acid polypeptide reads, in one-letter code: Protein GAT4 (121 aa).

The tract at residues E29–G48 is disordered. Residues C53 to C79 form a GATA-type zinc finger.

The sequence is that of Protein GAT4 (GAT4) from Saccharomyces cerevisiae (strain ATCC 204508 / S288c) (Baker's yeast).